A 327-amino-acid chain; its full sequence is Beta-ketoacyl-[acyl-carrier-protein] synthase III (327 aa).

Catalysis depends on residues C112 and H253. The tract at residues 254–258 (QANER) is ACP-binding. Residue N283 is part of the active site.

It belongs to the thiolase-like superfamily. FabH family. Homodimer.

The protein resides in the cytoplasm. The enzyme catalyses malonyl-[ACP] + acetyl-CoA + H(+) = 3-oxobutanoyl-[ACP] + CO2 + CoA. Its pathway is lipid metabolism; fatty acid biosynthesis. In terms of biological role, catalyzes the condensation reaction of fatty acid synthesis by the addition to an acyl acceptor of two carbons from malonyl-ACP. Catalyzes the first condensation reaction which initiates fatty acid synthesis and may therefore play a role in governing the total rate of fatty acid production. Possesses both acetoacetyl-ACP synthase and acetyl transacylase activities. Its substrate specificity determines the biosynthesis of branched-chain and/or straight-chain of fatty acids. The chain is Beta-ketoacyl-[acyl-carrier-protein] synthase III from Chlamydia trachomatis serovar A (strain ATCC VR-571B / DSM 19440 / HAR-13).